A 185-amino-acid chain; its full sequence is Adenine phosphoribosyltransferase (185 aa).

Belongs to the purine/pyrimidine phosphoribosyltransferase family. In terms of assembly, homodimer.

The protein resides in the cytoplasm. The enzyme catalyses AMP + diphosphate = 5-phospho-alpha-D-ribose 1-diphosphate + adenine. It participates in purine metabolism; AMP biosynthesis via salvage pathway; AMP from adenine: step 1/1. Functionally, catalyzes a salvage reaction resulting in the formation of AMP, that is energically less costly than de novo synthesis. This chain is Adenine phosphoribosyltransferase, found in Arthrobacter sp. (strain FB24).